A 168-amino-acid polypeptide reads, in one-letter code: 2-C-methyl-D-erythritol 2,4-cyclodiphosphate synthase (168 aa).

Asp8 and His10 together coordinate a divalent metal cation. Residues 8–10 (DLH) and 34–35 (HS) contribute to the 4-CDP-2-C-methyl-D-erythritol 2-phosphate site. A divalent metal cation is bound at residue His42. 4-CDP-2-C-methyl-D-erythritol 2-phosphate-binding positions include 56-58 (DIG), 61-65 (FPDTD), 132-135 (TTTE), and Arg142.

It belongs to the IspF family. Homotrimer. A divalent metal cation is required as a cofactor.

The catalysed reaction is 4-CDP-2-C-methyl-D-erythritol 2-phosphate = 2-C-methyl-D-erythritol 2,4-cyclic diphosphate + CMP. The protein operates within isoprenoid biosynthesis; isopentenyl diphosphate biosynthesis via DXP pathway; isopentenyl diphosphate from 1-deoxy-D-xylulose 5-phosphate: step 4/6. In terms of biological role, involved in the biosynthesis of isopentenyl diphosphate (IPP) and dimethylallyl diphosphate (DMAPP), two major building blocks of isoprenoid compounds. Catalyzes the conversion of 4-diphosphocytidyl-2-C-methyl-D-erythritol 2-phosphate (CDP-ME2P) to 2-C-methyl-D-erythritol 2,4-cyclodiphosphate (ME-CPP) with a corresponding release of cytidine 5-monophosphate (CMP). This chain is 2-C-methyl-D-erythritol 2,4-cyclodiphosphate synthase, found in Desulfosudis oleivorans (strain DSM 6200 / JCM 39069 / Hxd3) (Desulfococcus oleovorans).